Reading from the N-terminus, the 123-residue chain is WAP four-disulfide core domain protein 5 (123 aa).

A signal peptide spans methionine 1–glycine 24. WAP domains lie at lysine 27–valine 74 and serine 75–alanine 121. 8 disulfides stabilise this stretch: cysteine 34–cysteine 62, cysteine 41–cysteine 66, cysteine 49–cysteine 61, cysteine 55–cysteine 70, cysteine 81–cysteine 109, cysteine 88–cysteine 113, cysteine 96–cysteine 108, and cysteine 102–cysteine 117.

It is found in the secreted. Putative acid-stable proteinase inhibitor. This Gorilla gorilla gorilla (Western lowland gorilla) protein is WAP four-disulfide core domain protein 5 (WFDC5).